Here is a 447-residue protein sequence, read N- to C-terminus: Ribosomal protein uS12 methylthiotransferase RimO (447 aa).

One can recognise an MTTase N-terminal domain in the interval 10-120; the sequence is PKVGFVSLGC…VVNAVHDVVP (111 aa). 6 residues coordinate [4Fe-4S] cluster: C19, C55, C84, C153, C157, and C160. One can recognise a Radical SAM core domain in the interval 139–377; that stretch reads LTPRHYAYLK…MAHQQAISAA (239 aa). Positions 380-447 constitute a TRAM domain; sequence QMKIGKEIEV…DEYDLWAEML (68 aa).

The protein belongs to the methylthiotransferase family. RimO subfamily. Requires [4Fe-4S] cluster as cofactor.

Its subcellular location is the cytoplasm. It catalyses the reaction L-aspartate(89)-[ribosomal protein uS12]-hydrogen + (sulfur carrier)-SH + AH2 + 2 S-adenosyl-L-methionine = 3-methylsulfanyl-L-aspartate(89)-[ribosomal protein uS12]-hydrogen + (sulfur carrier)-H + 5'-deoxyadenosine + L-methionine + A + S-adenosyl-L-homocysteine + 2 H(+). In terms of biological role, catalyzes the methylthiolation of an aspartic acid residue of ribosomal protein uS12. This Pseudomonas savastanoi pv. phaseolicola (strain 1448A / Race 6) (Pseudomonas syringae pv. phaseolicola (strain 1448A / Race 6)) protein is Ribosomal protein uS12 methylthiotransferase RimO.